The sequence spans 330 residues: Ketol-acid reductoisomerase (NADP(+)) (330 aa).

A KARI N-terminal Rossmann domain is found at 2-181; that stretch reads AKVYYDNDVN…GATRAGVIET (180 aa). Residues 25–28, R48, S52, and 82–85 each bind NADP(+); these read YGSQ and DEVQ. H107 is an active-site residue. G133 lines the NADP(+) pocket. The region spanning 182–327 is the KARI C-terminal knotted domain; that stretch reads TFKEETETDL…ADLRMMMPFI (146 aa). Residues D190, E194, E226, and E230 each coordinate Mg(2+). S251 lines the substrate pocket.

Belongs to the ketol-acid reductoisomerase family. Requires Mg(2+) as cofactor.

It catalyses the reaction (2R)-2,3-dihydroxy-3-methylbutanoate + NADP(+) = (2S)-2-acetolactate + NADPH + H(+). The catalysed reaction is (2R,3R)-2,3-dihydroxy-3-methylpentanoate + NADP(+) = (S)-2-ethyl-2-hydroxy-3-oxobutanoate + NADPH + H(+). The protein operates within amino-acid biosynthesis; L-isoleucine biosynthesis; L-isoleucine from 2-oxobutanoate: step 2/4. It functions in the pathway amino-acid biosynthesis; L-valine biosynthesis; L-valine from pyruvate: step 2/4. Involved in the biosynthesis of branched-chain amino acids (BCAA). Catalyzes an alkyl-migration followed by a ketol-acid reduction of (S)-2-acetolactate (S2AL) to yield (R)-2,3-dihydroxy-isovalerate. In the isomerase reaction, S2AL is rearranged via a Mg-dependent methyl migration to produce 3-hydroxy-3-methyl-2-ketobutyrate (HMKB). In the reductase reaction, this 2-ketoacid undergoes a metal-dependent reduction by NADPH to yield (R)-2,3-dihydroxy-isovalerate. This chain is Ketol-acid reductoisomerase (NADP(+)), found in Macrococcus caseolyticus (strain JCSC5402) (Macrococcoides caseolyticum).